The primary structure comprises 66 residues: Gas vesicle protein A (66 aa).

This sequence belongs to the gas vesicle GvpA family. The gas vesicle shell is 2 nm thick and consists of a single layer of this protein. It forms helical ribs nearly perpendicular to the long axis of the vesicle.

The protein localises to the gas vesicle shell. Functionally, gas vesicles are hollow, gas filled proteinaceous nanostructures found in some microorganisms. During planktonic growth they allow positioning of the organism at a favorable depth for light or nutrient acquisition. GvpA forms the protein shell. The sequence is that of Gas vesicle protein A from Thiocapsa pendens (Amoebobacter pendens).